Consider the following 546-residue polypeptide: Pectinesterase 1 (546 aa).

An N-terminal signal peptide occupies residues 1–39 (MANPQQPLLIKTHKQNPIISFKILSFVITLFVALFLVAP). Residues 40–229 (YQVEIKHSNL…RKLMESSGKD (190 aa)) constitute a propeptide that is removed on maturation. Substrate contacts are provided by Thr308 and Gln338. Cys327 and Cys354 are disulfide-bonded. The active-site Proton donor is the Asp361. The Nucleophile role is filled by Asp382. Cys395 and Cys429 are oxidised to a cystine. The substrate site is built by Arg450 and Trp452.

The protein in the N-terminal section; belongs to the PMEI family. In the C-terminal section; belongs to the pectinesterase family.

Its subcellular location is the secreted. It is found in the cell wall. It catalyses the reaction [(1-&gt;4)-alpha-D-galacturonosyl methyl ester](n) + n H2O = [(1-&gt;4)-alpha-D-galacturonosyl](n) + n methanol + n H(+). It participates in glycan metabolism; pectin degradation; 2-dehydro-3-deoxy-D-gluconate from pectin: step 1/5. Functionally, pectinesterase may play a role in cell wall metabolism during fruit growth and development prior to ripening and may be required for preparing cell walls for softening by polygalacturonase during fruit ripening. The sequence is that of Pectinesterase 1 (PME1.9) from Solanum lycopersicum (Tomato).